A 157-amino-acid polypeptide reads, in one-letter code: Protein Smg (157 aa).

The protein belongs to the Smg family.

In Salmonella agona (strain SL483), this protein is Protein Smg.